Here is a 210-residue protein sequence, read N- to C-terminus: Na(+)-translocating NADH-quinone reductase subunit D (210 aa).

Transmembrane regions (helical) follow at residues 42–62 (FVMTLAVMFVTALSNFFVSLI), 72–92 (IIVQMAIIASLVIVVDQILKA), 103–123 (VFVGLIITNCIVMGRAEAFAM), 131–151 (FIDGIGNGLGYGFVLMTVGFF), and 178–198 (NGLMLLAPSAFFLIGFMIWAI).

Belongs to the NqrDE/RnfAE family. Composed of six subunits; NqrA, NqrB, NqrC, NqrD, NqrE and NqrF.

It is found in the cell inner membrane. It catalyses the reaction a ubiquinone + n Na(+)(in) + NADH + H(+) = a ubiquinol + n Na(+)(out) + NAD(+). In terms of biological role, NQR complex catalyzes the reduction of ubiquinone-1 to ubiquinol by two successive reactions, coupled with the transport of Na(+) ions from the cytoplasm to the periplasm. NqrA to NqrE are probably involved in the second step, the conversion of ubisemiquinone to ubiquinol. The chain is Na(+)-translocating NADH-quinone reductase subunit D from Vibrio cholerae serotype O1 (strain M66-2).